Reading from the N-terminus, the 560-residue chain is MAGYGRGFFGLFGGGGLVNAKVDTDKLAQKQDERLLTKATVVALDDAQDGSIILQGGANTYNYVGVESELLSVKTVVEEYQSMAQQPEIRKAVDIIVNDVVTCEEDETPVTVNLDKVEGISDTVKESITECFKEVMHLMDFDNTAYQKIRKWYVDGRQAYHVIVDPTNKKGGIKKLVMLDSRCIRPVYIVEKAMREGGIEAIESVTLKYYYNPNYNRNQFTGQSGTSQNFQPSQQELVFDDESIVYIDSGEEPLANGIVPGLLNPAIRPLNNLVTTEDATVIYAITRAPEKRAFYLDVGTLGKKSAEEYMTMMMGKFKNRNAYDRTTGKITGNAHLMGIAEDYWLPRREGQNATEIATVGGGNQLGEMDHVNYFREKLYDALMIPKSRLQEEGSINIGGSNLAEITQEELRFSKFCAGLRRRYSHFFMEFLRRQLILKGVTDEKDWNEKIKPFIKFEFTSDSYIREQQENAILNDRLASLNTVEPFVGSIFSIDYVMRNVLRMSDEEVKEQQAKIAEEKKKGLYPKVQADETGNYSGSDVSPLKFKPETLPFSGSTDDSI.

Residues 526-560 (KVQADETGNYSGSDVSPLKFKPETLPFSGSTDDSI) form a disordered region.

It belongs to the Tevenvirinae portal protein family. As to quaternary structure, homododecamer. Interacts with the large terminase subunit. Interacts with the major capsid protein. Interacts with the capsid vertex protein.

It is found in the virion. In terms of biological role, forms the portal vertex of the capsid. This portal plays critical roles in head assembly, genome packaging, neck/tail attachment, and genome ejection. The portal protein multimerizes as a single ring-shaped homododecamer arranged around a central channel. Binds to the terminase subunits to form the packaging machine. This chain is Portal protein, found in Salmonella typhi.